A 276-amino-acid chain; its full sequence is Undecaprenyl-diphosphatase (276 aa).

A run of 8 helical transmembrane segments spans residues M1 to V21, A39 to F59, Y84 to F104, L115 to A135, L159 to G179, F190 to A210, Q222 to L242, and F253 to V273.

Belongs to the UppP family.

The protein resides in the cell membrane. The enzyme catalyses di-trans,octa-cis-undecaprenyl diphosphate + H2O = di-trans,octa-cis-undecaprenyl phosphate + phosphate + H(+). Catalyzes the dephosphorylation of undecaprenyl diphosphate (UPP). Confers resistance to bacitracin. The protein is Undecaprenyl-diphosphatase of Mycolicibacterium gilvum (strain PYR-GCK) (Mycobacterium gilvum (strain PYR-GCK)).